The chain runs to 371 residues: DNA replication and repair protein RecF (371 aa).

ATP is bound at residue 30–37; sequence GANAQGKT.

The protein belongs to the RecF family.

It is found in the cytoplasm. Its function is as follows. The RecF protein is involved in DNA metabolism; it is required for DNA replication and normal SOS inducibility. RecF binds preferentially to single-stranded, linear DNA. It also seems to bind ATP. This chain is DNA replication and repair protein RecF, found in Lacticaseibacillus paracasei (strain ATCC 334 / BCRC 17002 / CCUG 31169 / CIP 107868 / KCTC 3260 / NRRL B-441) (Lactobacillus paracasei).